A 310-amino-acid chain; its full sequence is Porphobilinogen deaminase (310 aa).

Cys-241 carries the S-(dipyrrolylmethanemethyl)cysteine modification.

Belongs to the HMBS family. In terms of assembly, monomer. Requires dipyrromethane as cofactor.

It carries out the reaction 4 porphobilinogen + H2O = hydroxymethylbilane + 4 NH4(+). It participates in porphyrin-containing compound metabolism; protoporphyrin-IX biosynthesis; coproporphyrinogen-III from 5-aminolevulinate: step 2/4. Its function is as follows. Tetrapolymerization of the monopyrrole PBG into the hydroxymethylbilane pre-uroporphyrinogen in several discrete steps. In Pelobacter propionicus (strain DSM 2379 / NBRC 103807 / OttBd1), this protein is Porphobilinogen deaminase.